A 182-amino-acid chain; its full sequence is 5-formyltetrahydrofolate cyclo-ligase (182 aa).

Residues M1–A21 are disordered. Residues P11 to A21 are compositionally biased toward polar residues. ATP is bound by residues G128–D135 and D167.

This sequence belongs to the 5-formyltetrahydrofolate cyclo-ligase family.

It catalyses the reaction (6S)-5-formyl-5,6,7,8-tetrahydrofolate + ATP = (6R)-5,10-methenyltetrahydrofolate + ADP + phosphate. It functions in the pathway one-carbon metabolism; tetrahydrofolate interconversion. In terms of biological role, involved in the removal of 5-formyltetrahydrofolate. In vitro, it is a potent inhibitor of various folate-dependent enzymes in the C1 metabolism network and in vivo it might function as a folate storage. 5-formyltetrahydrofolate is also used as an antifolate rescue agent in cancer chemotherapy. Catalyzes the irreversible ATP-dependent transformation of 5-formyltetrahydrofolate (5-CHO-THF) to form 5,10-methenyltetrahydrofolate (5,10-CH=THF). The reverse reaction is catalyzed by the serine hydroxymethyltransferase GlyA (SHMT). The protein is 5-formyltetrahydrofolate cyclo-ligase (ygfA) of Escherichia coli O157:H7.